We begin with the raw amino-acid sequence, 151 residues long: UPF0735 ACT domain-containing protein SAUSA300_1599 (151 aa).

Residues 74 to 149 enclose the ACT domain; sequence TLILYVTDIV…YVSKVELISM (76 aa).

This sequence belongs to the UPF0735 family.

This Staphylococcus aureus (strain USA300) protein is UPF0735 ACT domain-containing protein SAUSA300_1599.